Reading from the N-terminus, the 61-residue chain is Large ribosomal subunit protein bL32 (61 aa).

Over residues 1-16 the composition is skewed to basic residues; sequence MAVPKRKTSPSKRGMR. The interval 1-41 is disordered; sequence MAVPKRKTSPSKRGMRRSADALKASTYVEDKNSGELRRPHH. Positions 28-41 are enriched in basic and acidic residues; the sequence is VEDKNSGELRRPHH.

Belongs to the bacterial ribosomal protein bL32 family.

This chain is Large ribosomal subunit protein bL32, found in Rhizobium rhizogenes (strain K84 / ATCC BAA-868) (Agrobacterium radiobacter).